We begin with the raw amino-acid sequence, 157 residues long: 2-C-methyl-D-erythritol 2,4-cyclodiphosphate synthase (157 aa).

Residues Asp-8 and His-10 each coordinate a divalent metal cation. Residues Asp-8 to His-10 and His-34 to Ser-35 each bind 4-CDP-2-C-methyl-D-erythritol 2-phosphate. Residue His-42 participates in a divalent metal cation binding. Residues Asp-56–Gly-58, Phe-61–Asp-65, Ala-100–Leu-106, Thr-132–Glu-135, Phe-139, and Arg-142 each bind 4-CDP-2-C-methyl-D-erythritol 2-phosphate.

The protein belongs to the IspF family. In terms of assembly, homotrimer. It depends on a divalent metal cation as a cofactor.

The catalysed reaction is 4-CDP-2-C-methyl-D-erythritol 2-phosphate = 2-C-methyl-D-erythritol 2,4-cyclic diphosphate + CMP. It participates in isoprenoid biosynthesis; isopentenyl diphosphate biosynthesis via DXP pathway; isopentenyl diphosphate from 1-deoxy-D-xylulose 5-phosphate: step 4/6. Functionally, involved in the biosynthesis of isopentenyl diphosphate (IPP) and dimethylallyl diphosphate (DMAPP), two major building blocks of isoprenoid compounds. Catalyzes the conversion of 4-diphosphocytidyl-2-C-methyl-D-erythritol 2-phosphate (CDP-ME2P) to 2-C-methyl-D-erythritol 2,4-cyclodiphosphate (ME-CPP) with a corresponding release of cytidine 5-monophosphate (CMP). The protein is 2-C-methyl-D-erythritol 2,4-cyclodiphosphate synthase of Photorhabdus laumondii subsp. laumondii (strain DSM 15139 / CIP 105565 / TT01) (Photorhabdus luminescens subsp. laumondii).